The primary structure comprises 134 residues: Peptide methionine sulfoxide reductase MsrB (134 aa).

The MsrB domain maps to 9 to 131 (DEYWRDKLDA…NSASIQLQKE (123 aa)). Residues cysteine 48, cysteine 51, cysteine 97, and cysteine 100 each coordinate Zn(2+). The active-site Nucleophile is the cysteine 120.

This sequence belongs to the MsrB Met sulfoxide reductase family. It depends on Zn(2+) as a cofactor.

The catalysed reaction is L-methionyl-[protein] + [thioredoxin]-disulfide + H2O = L-methionyl-(R)-S-oxide-[protein] + [thioredoxin]-dithiol. The protein is Peptide methionine sulfoxide reductase MsrB of Saccharophagus degradans (strain 2-40 / ATCC 43961 / DSM 17024).